The chain runs to 204 residues: Methylthioribulose-1-phosphate dehydratase (204 aa).

Residues histidine 96 and histidine 98 each coordinate Zn(2+).

Belongs to the aldolase class II family. MtnB subfamily. Requires Zn(2+) as cofactor.

The catalysed reaction is 5-(methylsulfanyl)-D-ribulose 1-phosphate = 5-methylsulfanyl-2,3-dioxopentyl phosphate + H2O. It functions in the pathway amino-acid biosynthesis; L-methionine biosynthesis via salvage pathway; L-methionine from S-methyl-5-thio-alpha-D-ribose 1-phosphate: step 2/6. Functionally, catalyzes the dehydration of methylthioribulose-1-phosphate (MTRu-1-P) into 2,3-diketo-5-methylthiopentyl-1-phosphate (DK-MTP-1-P). The sequence is that of Methylthioribulose-1-phosphate dehydratase from Methylococcus capsulatus (strain ATCC 33009 / NCIMB 11132 / Bath).